Reading from the N-terminus, the 304-residue chain is Xylanase inhibitor protein 1 (304 aa).

An N-terminal signal peptide occupies residues 1–29 (MVALGRRSWLVPLAMVLAVSSCLAGPAMA). The GH18 domain occupies 34-304 (GQMTVFWGRN…GYGKTVKYWA (271 aa)). 2 disulfide bridges follow: Cys-53–Cys-93 and Cys-190–Cys-219.

The protein belongs to the glycosyl hydrolase 18 family. Xylanase inhibitor subfamily. In terms of assembly, binds to fungal GH11 xylanases. Constitutively expressed in shoots.

The protein localises to the secreted. Its function is as follows. Fungal xylanase inhibitor. Possesses competitive inhibiting activity against fungal endo-1,4-beta-D-xylanases belonging to glycoside hydrolase family 11 (GH11). May function in plant defense against secreted fungal pathogen xylanases. Is similar to class III chitinases, but does not exhibit chitinase activity. The chain is Xylanase inhibitor protein 1 from Oryza sativa subsp. japonica (Rice).